A 285-amino-acid chain; its full sequence is 2-dehydro-3-deoxyphosphooctonate aldolase (285 aa).

The protein belongs to the KdsA family.

The protein resides in the cytoplasm. The catalysed reaction is D-arabinose 5-phosphate + phosphoenolpyruvate + H2O = 3-deoxy-alpha-D-manno-2-octulosonate-8-phosphate + phosphate. Its pathway is carbohydrate biosynthesis; 3-deoxy-D-manno-octulosonate biosynthesis; 3-deoxy-D-manno-octulosonate from D-ribulose 5-phosphate: step 2/3. The protein operates within bacterial outer membrane biogenesis; lipopolysaccharide biosynthesis. The protein is 2-dehydro-3-deoxyphosphooctonate aldolase of Leptothrix cholodnii (strain ATCC 51168 / LMG 8142 / SP-6) (Leptothrix discophora (strain SP-6)).